The primary structure comprises 367 residues: Chorismate synthase (367 aa).

NADP(+)-binding residues include Arg48 and Arg54. Residues 125-127 (RSS), 238-239 (NA), Gly278, 293-297 (KPTSS), and Arg319 contribute to the FMN site.

Belongs to the chorismate synthase family. In terms of assembly, homotetramer. FMNH2 serves as cofactor.

It carries out the reaction 5-O-(1-carboxyvinyl)-3-phosphoshikimate = chorismate + phosphate. Its pathway is metabolic intermediate biosynthesis; chorismate biosynthesis; chorismate from D-erythrose 4-phosphate and phosphoenolpyruvate: step 7/7. Its function is as follows. Catalyzes the anti-1,4-elimination of the C-3 phosphate and the C-6 proR hydrogen from 5-enolpyruvylshikimate-3-phosphate (EPSP) to yield chorismate, which is the branch point compound that serves as the starting substrate for the three terminal pathways of aromatic amino acid biosynthesis. This reaction introduces a second double bond into the aromatic ring system. The chain is Chorismate synthase from Xanthomonas campestris pv. campestris (strain 8004).